The sequence spans 455 residues: Ribulose bisphosphate carboxylase large chain (455 aa).

N6,N6,N6-trimethyllysine is present on K5. The substrate site is built by N114 and T164. K166 acts as the Proton acceptor in catalysis. Substrate is bound at residue K168. Mg(2+) is bound by residues K192, D194, and E195. Position 192 is an N6-carboxylysine (K192). H285 acts as the Proton acceptor in catalysis. Substrate-binding residues include R286, H318, and S370.

Belongs to the RuBisCO large chain family. Type I subfamily. In terms of assembly, heterohexadecamer of 8 large chains and 8 small chains; disulfide-linked. The disulfide link is formed within the large subunit homodimers. The cofactor is Mg(2+). In terms of processing, the disulfide bond which can form in the large chain dimeric partners within the hexadecamer appears to be associated with oxidative stress and protein turnover.

It localises to the plastid. It is found in the chloroplast. The catalysed reaction is 2 (2R)-3-phosphoglycerate + 2 H(+) = D-ribulose 1,5-bisphosphate + CO2 + H2O. It carries out the reaction D-ribulose 1,5-bisphosphate + O2 = 2-phosphoglycolate + (2R)-3-phosphoglycerate + 2 H(+). Functionally, ruBisCO catalyzes two reactions: the carboxylation of D-ribulose 1,5-bisphosphate, the primary event in carbon dioxide fixation, as well as the oxidative fragmentation of the pentose substrate in the photorespiration process. Both reactions occur simultaneously and in competition at the same active site. This is Ribulose bisphosphate carboxylase large chain from Lupinus microcarpus var. densiflorus (Whitewhorl lupine).